The chain runs to 302 residues: Phosphoribosylaminoimidazole-succinocarboxamide synthase (302 aa).

This sequence belongs to the SAICAR synthetase family.

It catalyses the reaction 5-amino-1-(5-phospho-D-ribosyl)imidazole-4-carboxylate + L-aspartate + ATP = (2S)-2-[5-amino-1-(5-phospho-beta-D-ribosyl)imidazole-4-carboxamido]succinate + ADP + phosphate + 2 H(+). Its pathway is purine metabolism; IMP biosynthesis via de novo pathway; 5-amino-1-(5-phospho-D-ribosyl)imidazole-4-carboxamide from 5-amino-1-(5-phospho-D-ribosyl)imidazole-4-carboxylate: step 1/2. This Leptothrix cholodnii (strain ATCC 51168 / LMG 8142 / SP-6) (Leptothrix discophora (strain SP-6)) protein is Phosphoribosylaminoimidazole-succinocarboxamide synthase.